The following is a 788-amino-acid chain: Integrin beta-6 (788 aa).

The N-terminal stretch at 1–21 (MGIELLCLFFLFLGRNDHVQG) is a signal peptide. Residues 22–71 (GCALGGAETCEDCLLIGPQCAWCSQENFTYLSGVGERCDTPANLLAKGCQ) form the PSI domain. Residues 22–709 (GCALGGAETC…KDCPKPPNSP (688 aa)) lie on the Extracellular side of the membrane. Disulfide bonds link C23–C41, C31–C454, C34–C59, C44–C70, C197–C204, C252–C293, C394–C406, C426–C452, C456–C476, C467–C479, C481–C490, C492–C519, C502–C517, C511–C522, C524–C537, C539–C560, C544–C558, C552–C563, C565–C574, C576–C599, C583–C597, C591–C602, C604–C614, C617–C620, C624–C670, C630–C649, C633–C645, and C678–C702. Residues N48 and N97 are each glycosylated (N-linked (GlcNAc...) asparagine). In terms of domain architecture, VWFA spans 131–371 (YPVDLYYLMD…QLIISAYEEL (241 aa)). 3 residues coordinate Mg(2+): D140, S142, and S144. 4 residues coordinate Ca(2+): S144, D147, D148, and E179. Ca(2+)-binding residues include N235, D237, P239, and E240. Residue E240 participates in Mg(2+) binding. N-linked (GlcNAc...) asparagine glycosylation occurs at N260. Positions 271 and 355 each coordinate Ca(2+). Residue N387 is glycosylated (N-linked (GlcNAc...) asparagine). The N-linked (GlcNAc...) asparagine glycan is linked to N418. I-EGF domains are found at residues 456–491 (CQKEVEVNSSKCNHGNGSFQCGVCACNPGHMGPHCE), 492–538 (CGED…PYCQ), 539–575 (CDDFSCVRHKGLLCGDNGDCECGECVCRSGWTGEYCN), and 576–615 (CTTSTDQCVSEDGVLCSGRGDCVCGKCICTNPGASGLTCE). 2 N-linked (GlcNAc...) asparagine glycosylation sites follow: N463 and N471. The chain crosses the membrane as a helical span at residues 710–730 (MIMLGVSLAILLIGVVLLCIW). Residues 731 to 758 (KLLVSFHDRKEVAKFEAERSKAKWQTGT) are interaction with HAX1. Residues 731–788 (KLLVSFHDRKEVAKFEAERSKAKWQTGTNPLYRGSTSTFKNVTYKHREKQKVDLSMDG) lie on the Cytoplasmic side of the membrane.

It belongs to the integrin beta chain family. Heterodimer of an alpha and a beta subunit. Interacts with FLNB. Interacts with HAX1. ITGAV:ITGB6 interacts with FBN1. ITGAV:ITGB6 interacts with TGFB1.

Its subcellular location is the cell membrane. It is found in the cell junction. It localises to the focal adhesion. Integrin alpha-V:beta-6 (ITGAV:ITGB6) is a receptor for fibronectin and cytotactin. It recognizes the sequence R-G-D in its ligands. ITGAV:ITGB6 acts as a receptor for fibrillin-1 (FBN1) and mediates R-G-D-dependent cell adhesion to FBN1. Integrin alpha-V:beta-6 (ITGAV:ITGB6) mediates R-G-D-dependent release of transforming growth factor beta-1 (TGF-beta-1) from regulatory Latency-associated peptide (LAP), thereby playing a key role in TGF-beta-1 activation. In Sus scrofa (Pig), this protein is Integrin beta-6 (ITGB6).